A 318-amino-acid chain; its full sequence is MSADEVNIDTASLEELRDILINKTGNTKLANRFRALFNLKSVGSEDSDKERAHKAIKYIAECFNDDSELLKHEVAYVLGQTKDLYAAPYLREVLENDNQQCMVRHEAAEALGALGDKESLPLLEKYFKEDPLLEIRQTCELAIERIHWENSEKAKNEVLEKSLYTSIDPAPPLATNDSTSKVEKLKEILNDQDKPLFERYRAMFRLRDIGTDEACLALASGFDDPSALFKHEIAYVFGQMCNPVTVPSLIKVLKDESEAGMVRHEAAEALGSIATDECLPVLQSFLNDSEPVVRDSAIVALDMYEYENSNELEYATVK.

2 HEAT-like PBS-type repeats span residues 70–96 (LKHEVAYVLGQTKDLYAAPYLREVLEN) and 103–129 (VRHEAAEALGALGDKESLPLLEKYFKE). 8 residues coordinate Fe cation: histidine 72, glutamate 73, histidine 105, glutamate 106, histidine 231, glutamate 232, histidine 264, and glutamate 265. An HEAT-like PBS-type 3 repeat occupies 262 to 288 (VRHEAAEALGSIATDECLPVLQSFLND).

The protein belongs to the deoxyhypusine hydroxylase family. It depends on Fe(2+) as a cofactor.

The protein localises to the cytoplasm. Its subcellular location is the nucleus. The enzyme catalyses [eIF5A protein]-deoxyhypusine + AH2 + O2 = [eIF5A protein]-hypusine + A + H2O. It participates in protein modification; eIF5A hypusination. Functionally, catalyzes the hydroxylation of the N(6)-(4-aminobutyl)-L-lysine intermediate to form hypusine, an essential post-translational modification only found in mature eIF-5A factor. This Candida albicans (strain SC5314 / ATCC MYA-2876) (Yeast) protein is Deoxyhypusine hydroxylase.